Reading from the N-terminus, the 267-residue chain is Glucosamine-6-phosphate deaminase (267 aa).

The Proton acceptor; for enolization step role is filled by Asp72. The active-site For ring-opening step is the Asp141. The active-site Proton acceptor; for ring-opening step is His143. The For ring-opening step role is filled by Glu148.

Belongs to the glucosamine/galactosamine-6-phosphate isomerase family. NagB subfamily. In terms of assembly, homohexamer.

It carries out the reaction alpha-D-glucosamine 6-phosphate + H2O = beta-D-fructose 6-phosphate + NH4(+). It functions in the pathway amino-sugar metabolism; N-acetylneuraminate degradation; D-fructose 6-phosphate from N-acetylneuraminate: step 5/5. Its activity is regulated as follows. Allosterically activated by N-acetylglucosamine 6-phosphate (GlcNAc6P). Its function is as follows. Catalyzes the reversible isomerization-deamination of glucosamine 6-phosphate (GlcN6P) to form fructose 6-phosphate (Fru6P) and ammonium ion. The polypeptide is Glucosamine-6-phosphate deaminase (Actinobacillus pleuropneumoniae serotype 5b (strain L20)).